The following is a 184-amino-acid chain: Transmembrane protein 140 (184 aa).

At 1-12 (MAISRVWRNRLS) the chain is on the cytoplasmic side. The helical transmembrane segment at 13-33 (FMAIMILVAMVLSLMSYALLW) threads the bilayer. Over 34 to 83 (KAGNLTDVPNLRIGFYNFCLWKEDIGSLECYNFPELGVLGIPQVGLALAR) the chain is Extracellular. Asn37 carries N-linked (GlcNAc...) asparagine glycosylation. The helical transmembrane segment at 84-104 (LGVYGALVLAVFVPLPLLLAQ) threads the bilayer. The Cytoplasmic portion of the chain corresponds to 105–117 (CNSDEGEWRLAVG). A helical transmembrane segment spans residues 118–138 (FLGASSVLLAGGLSLFLFLVW). Residues 139 to 149 (KWLRLSFLGPG) are Extracellular-facing. The helical transmembrane segment at 150–170 (FLSLCLAQALLIILLMAMVMF) threads the bilayer. The Cytoplasmic portion of the chain corresponds to 171 to 184 (PPRDKKDKNHWENC).

The protein localises to the membrane. This chain is Transmembrane protein 140 (Tmem140), found in Rattus norvegicus (Rat).